The following is a 248-amino-acid chain: MYKLVLIRHGESTWNLENRFTGWVDVDLTETGADQARQAGKLLKDAGLGFDVAYTSVLKRAIRTLWHVQDEMDLMWIPVRNEWRLNERHYGALAGLNKAETAAKFGDEQVLVWRRSYDTPPPALEPTDPRASYDDPRYANVPRNEIPLTECLKDTVARVMPLWNESIAPDIQSGKRVVIAAHGNSIRALVKYLDQISDDDIVGLNIPNGTPLVYELDADLRPLRHYYLGDQDAIAASLAAVASQGKAR.

Substrate-binding positions include 8-15 (RHGESTWN), 21-22 (TG), Arg60, 87-90 (ERHY), Lys98, and 114-115 (RR). His9 acts as the Tele-phosphohistidine intermediate in catalysis. Residue Glu87 is the Proton donor/acceptor of the active site. Residues 118 to 137 (DTPPPALEPTDPRASYDDPR) form a disordered region. Residues 127-137 (TDPRASYDDPR) are compositionally biased toward basic and acidic residues. 183–184 (GN) is a binding site for substrate.

It belongs to the phosphoglycerate mutase family. BPG-dependent PGAM subfamily. As to quaternary structure, homodimer.

The enzyme catalyses (2R)-2-phosphoglycerate = (2R)-3-phosphoglycerate. It functions in the pathway carbohydrate degradation; glycolysis; pyruvate from D-glyceraldehyde 3-phosphate: step 3/5. Its function is as follows. Catalyzes the interconversion of 2-phosphoglycerate and 3-phosphoglycerate. In Cupriavidus necator (strain ATCC 17699 / DSM 428 / KCTC 22496 / NCIMB 10442 / H16 / Stanier 337) (Ralstonia eutropha), this protein is 2,3-bisphosphoglycerate-dependent phosphoglycerate mutase.